Reading from the N-terminus, the 144-residue chain is MIALIQRVSQAKVDVDKQTVGEIGHGLLVLLGVQKDDDHVKADRLIEKVLNYRVFSDAEGKMNLNVQQVKGQVLVVSQFTLAADTQKGLRPSFSRGASPDMAEALYDYVVKKCGEKIPTFSGQFAADMQVSLTNDGPVTFWLEI.

Positions 136 to 137 match the Gly-cisPro motif, important for rejection of L-amino acids motif; that stretch reads GP.

It belongs to the DTD family. Homodimer.

It localises to the cytoplasm. The catalysed reaction is glycyl-tRNA(Ala) + H2O = tRNA(Ala) + glycine + H(+). It catalyses the reaction a D-aminoacyl-tRNA + H2O = a tRNA + a D-alpha-amino acid + H(+). An aminoacyl-tRNA editing enzyme that deacylates mischarged D-aminoacyl-tRNAs. Also deacylates mischarged glycyl-tRNA(Ala), protecting cells against glycine mischarging by AlaRS. Acts via tRNA-based rather than protein-based catalysis; rejects L-amino acids rather than detecting D-amino acids in the active site. By recycling D-aminoacyl-tRNA to D-amino acids and free tRNA molecules, this enzyme counteracts the toxicity associated with the formation of D-aminoacyl-tRNA entities in vivo and helps enforce protein L-homochirality. The sequence is that of D-aminoacyl-tRNA deacylase from Pasteurella multocida (strain Pm70).